We begin with the raw amino-acid sequence, 221 residues long: Alpha-ketoglutarate-dependent dioxygenase alkB homolog 7, mitochondrial (221 aa).

The N-terminal 23 residues, 1–23, are a transit peptide targeting the mitochondrion; sequence MAGGGQVVLRTLSQQGWVRGSGA. Positions 121 and 123 each coordinate Fe cation. 2-oxoglutarate is bound at residue Tyr-165. His-177 contributes to the Fe cation binding site. Residues 197–199 and Arg-203 each bind 2-oxoglutarate; that span reads RIS.

Belongs to the alkB family. The cofactor is Fe(2+).

The protein resides in the mitochondrion matrix. In terms of biological role, may function as protein hydroxylase; can catalyze auto-hydroxylation at Leu-110 (in vitro), but this activity may be due to the absence of the true substrate. Required to induce programmed necrosis in response to DNA damage caused by cytotoxic alkylating agents. Acts by triggering the collapse of mitochondrial membrane potential and loss of mitochondrial function that leads to energy depletion and cell death. ALKBH7-mediated necrosis is probably required to prevent the accumulation of cells with DNA damage. Does not display DNA demethylase activity. Involved in fatty acid metabolism. This Bos taurus (Bovine) protein is Alpha-ketoglutarate-dependent dioxygenase alkB homolog 7, mitochondrial (ALKBH7).